We begin with the raw amino-acid sequence, 293 residues long: Pyridoxal 5'-phosphate synthase subunit PdxS (293 aa).

Residue aspartate 23 participates in D-ribose 5-phosphate binding. Lysine 80 acts as the Schiff-base intermediate with D-ribose 5-phosphate in catalysis. Glycine 152 contacts D-ribose 5-phosphate. Arginine 164 is a D-glyceraldehyde 3-phosphate binding site. D-ribose 5-phosphate is bound by residues glycine 213 and 234–235 (GS).

It belongs to the PdxS/SNZ family. In terms of assembly, in the presence of PdxT, forms a dodecamer of heterodimers.

It carries out the reaction aldehydo-D-ribose 5-phosphate + D-glyceraldehyde 3-phosphate + L-glutamine = pyridoxal 5'-phosphate + L-glutamate + phosphate + 3 H2O + H(+). It functions in the pathway cofactor biosynthesis; pyridoxal 5'-phosphate biosynthesis. Catalyzes the formation of pyridoxal 5'-phosphate from ribose 5-phosphate (RBP), glyceraldehyde 3-phosphate (G3P) and ammonia. The ammonia is provided by the PdxT subunit. Can also use ribulose 5-phosphate and dihydroxyacetone phosphate as substrates, resulting from enzyme-catalyzed isomerization of RBP and G3P, respectively. The polypeptide is Pyridoxal 5'-phosphate synthase subunit PdxS (Dehalococcoides mccartyi (strain ATCC BAA-2100 / JCM 16839 / KCTC 5957 / BAV1)).